The primary structure comprises 397 residues: Lysophospholipid transporter LplT (397 aa).

Topologically, residues 1–17 (MSESVHTNTSLWSKGMK) are periplasmic. A helical membrane pass occupies residues 18–38 (AVIVAQFLSAFGDNALLFATL). The Cytoplasmic portion of the chain corresponds to 39–52 (ALLKAQFYPEWSQP). Residues 53–73 (ILQMVFVGAYILFAPFVGQVA) traverse the membrane as a helical segment. Residues 74–90 (DSFAKGRVMMFANGLKL) lie on the Periplasmic side of the membrane. A helical transmembrane segment spans residues 91-111 (LGAASICFGINPFLGYTLVGV). The Cytoplasmic portion of the chain corresponds to 112–144 (GAAAYSPAKYGILGELTTGSKLVKANGLMEAST). Residues 145 to 165 (IAAILLGSVAGGVLADWHVLV) form a helical membrane-spanning segment. Position 166 (Ala-166) is a topological domain, periplasmic. Residues 167–187 (LAACALAYGGAVVANIYIPKL) form a helical membrane-spanning segment. Topologically, residues 188-226 (AAARPGQSWNLINMTRSFLNACTSLWRNGETRFSLVGTS) are cytoplasmic. Residues 227 to 247 (LFWGAGVTLRFLLVLWVPVAL) form a helical membrane-spanning segment. The Periplasmic portion of the chain corresponds to 248–256 (GITDNATPT). Residues 257-277 (YLNAMVAIGIVVGAGAAAKLV) traverse the membrane as a helical segment. Over 278-280 (TLE) the chain is Cytoplasmic. Residues 281-301 (TVSRCMPAGILIGVVVLIFSL) traverse the membrane as a helical segment. Over 302 to 304 (QHE) the chain is Periplasmic. Residues 305 to 325 (LLPAYALLMLIGVLGGFFVVP) traverse the membrane as a helical segment. The Cytoplasmic segment spans residues 326-343 (LNALLQERGKKSVGAGNA). Residues 344–364 (IAVQNLGENSAMLLMLGIYSL) form a helical membrane-spanning segment. The Periplasmic portion of the chain corresponds to 365-366 (AV). A helical transmembrane segment spans residues 367–387 (MVGIPVVPIGIGFGTLFALAI). The Cytoplasmic segment spans residues 388 to 397 (TALWIWQRRH).

It belongs to the major facilitator superfamily. LplT (TC 2.A.1.42) family.

It is found in the cell inner membrane. Functionally, catalyzes the facilitated diffusion of 2-acyl-glycero-3-phosphoethanolamine (2-acyl-GPE) into the cell. This Escherichia coli O9:H4 (strain HS) protein is Lysophospholipid transporter LplT.